The chain runs to 1624 residues: ATP-binding cassette sub-family A member 9 (1624 aa).

A helical transmembrane segment spans residues 31 to 51 (LLEWLFSFLLVLFLYLFFSNL). N-linked (GlcNAc...) asparagine glycans are attached at residues Asn-120 and Asn-195. Transmembrane regions (helical) follow at residues 221–243 (VATD…YVSV), 269–289 (SWGL…ALIV), 300–320 (FVMV…LAFL), 329–349 (FLTG…GFPA), 354–374 (LPAF…TVGM), and 398–418 (LIIA…VLTL). An ABC transporter 1 domain is found at 481–716 (IRIKNLKKEY…WGIGYHLSLH (236 aa)). Residue 517-524 (GHSGAGKT) participates in ATP binding. Residues 864 to 884 (LWTILLLFGISFIPQLLEHLF) traverse the membrane as a helical segment. Asn-949 is a glycosylation site (N-linked (GlcNAc...) asparagine). 6 helical membrane-spanning segments follow: residues 1026–1046 (TFFW…SSIG), 1065–1085 (AYWF…LLLM), 1108–1128 (ILCS…ISFI), 1136–1156 (SGIW…ATDL), 1163–1183 (GLFF…LFIF), and 1200–1220 (EIVY…LFIL). The ABC transporter 2 domain maps to 1288 to 1521 (LRKEYAGKKK…FGKDYLLEMK (234 aa)). 1326–1333 (GHNGAGKS) contributes to the ATP binding site.

This sequence belongs to the ABC transporter superfamily. ABCA family. As to expression, widely expressed with higher expression in heart.

Its subcellular location is the membrane. Functionally, transporter that may play a role in monocyte differentiation and lipid transport and homeostasis. The polypeptide is ATP-binding cassette sub-family A member 9 (ABCA9) (Homo sapiens (Human)).